The sequence spans 134 residues: Protein Turandot E (134 aa).

An N-terminal signal peptide occupies residues 1–38 (MSYNRTLHSTTSILKMNSALQISCLLLVLGCLLGSGHG).

This sequence belongs to the Turandot family.

Its subcellular location is the secreted. A humoral factor that may play a role in stress tolerance. The polypeptide is Protein Turandot E (Drosophila yakuba (Fruit fly)).